Reading from the N-terminus, the 180-residue chain is Small ribosomal subunit protein uS4 (180 aa).

The S4 RNA-binding domain maps to 103-165 (RRLQTIVYRK…KGSPFAKEGH (63 aa)).

The protein belongs to the universal ribosomal protein uS4 family. As to quaternary structure, part of the 30S ribosomal subunit. Contacts protein S5. The interaction surface between S4 and S5 is involved in control of translational fidelity.

Functionally, one of the primary rRNA binding proteins, it binds directly to 16S rRNA where it nucleates assembly of the body of the 30S subunit. Its function is as follows. With S5 and S12 plays an important role in translational accuracy. This Thermococcus kodakarensis (strain ATCC BAA-918 / JCM 12380 / KOD1) (Pyrococcus kodakaraensis (strain KOD1)) protein is Small ribosomal subunit protein uS4.